A 104-amino-acid polypeptide reads, in one-letter code: Large ribosomal subunit protein bL21 (104 aa).

Belongs to the bacterial ribosomal protein bL21 family. As to quaternary structure, part of the 50S ribosomal subunit. Contacts protein L20.

Functionally, this protein binds to 23S rRNA in the presence of protein L20. The chain is Large ribosomal subunit protein bL21 from Helicobacter pylori (strain HPAG1).